We begin with the raw amino-acid sequence, 516 residues long: 1-pyrroline-5-carboxylate dehydrogenase (516 aa).

Active-site residues include glutamate 287 and cysteine 321.

This sequence belongs to the aldehyde dehydrogenase family. RocA subfamily.

It catalyses the reaction L-glutamate 5-semialdehyde + NAD(+) + H2O = L-glutamate + NADH + 2 H(+). It participates in amino-acid degradation; L-proline degradation into L-glutamate; L-glutamate from L-proline: step 2/2. The chain is 1-pyrroline-5-carboxylate dehydrogenase from Bacillus licheniformis (strain ATCC 14580 / DSM 13 / JCM 2505 / CCUG 7422 / NBRC 12200 / NCIMB 9375 / NCTC 10341 / NRRL NRS-1264 / Gibson 46).